The primary structure comprises 198 residues: Probable GTP-binding protein EngB (198 aa).

The EngB-type G domain maps to 22 to 196 (NLSEIAFVGR…WNWIKGQAEL (175 aa)). Residues 30 to 37 (GRSNVGKS), 57 to 61 (GKTQT), 75 to 78 (DVPG), 142 to 145 (TKAD), and 175 to 177 (FSA) contribute to the GTP site. Residues serine 37 and threonine 59 each contribute to the Mg(2+) site.

It belongs to the TRAFAC class TrmE-Era-EngA-EngB-Septin-like GTPase superfamily. EngB GTPase family. It depends on Mg(2+) as a cofactor.

Necessary for normal cell division and for the maintenance of normal septation. In Oenococcus oeni (strain ATCC BAA-331 / PSU-1), this protein is Probable GTP-binding protein EngB.